The sequence spans 316 residues: Transcription initiation factor IIB (316 aa).

Residues proline 11 to glycine 42 form a TFIIB-type zinc finger. The Zn(2+) site is built by cysteine 15, histidine 18, cysteine 34, and cysteine 37. Serine 70, serine 76, and serine 92 each carry phosphoserine. 2 consecutive repeat copies span residues methionine 124–lysine 200 and phenylalanine 218–proline 294. Residues lysine 152, arginine 154, lysine 189, and lysine 196 each coordinate DNA. The segment at lysine 189–arginine 193 is core promoter DNA-binding. Position 238 is an N6-acetyllysine; by autocatalysis (lysine 238). Positions leucine 244–leucine 316 are necessary for TATA box-bound TBP complex formation. Position 248 (arginine 248) interacts with DNA. The core promoter DNA-binding stretch occupies residues serine 249–serine 252. DNA is bound by residues lysine 272, alanine 281, threonine 284, arginine 286, and arginine 290. The interval valine 283 to arginine 286 is core promoter DNA-binding.

Belongs to the TFIIB family. As to quaternary structure, found in a ternary complex with TATA box-bound TBP. Part of a TFIID-containing RNA polymerase II pre-initiation complex (PIC) that is composed of TBP and at least GTF2A1, GTF2A2, GTF2E1, GTF2E2, GTF2F1, GTF2H2, GTF2H3, GTF2H4, GTF2H5, GTF2B, TCEA1, ERCC2, ERCC3, TAF1, TAF2, TAF3, TAF4, TAF5, TAF6, TAF7, TAF8, TAF9, TAF10, TAF11, TAF12 and TAF13. Associates with TFIID-TFIIA (DA complex) to form TFIID-TFIIA-TFIIB (DAB complex), which is then recognized by RNA polymerase II (Pol II). Found in a RNA polymerase II initiation complex. Interacts (via C-terminus) with TBP; this interaction with TATA box-bound TBP guides Pol II into the PIC. Interacts (via N-terminus) with Pol II. Interacts (via C-terminus) with SSU72; this interaction is inhibited by SYMPK. Interacts with NR2F1; this interaction is direct. Interacts with PGR. Interacts with ESR1. Interacts with GTF2F1 (via C-terminus and preferentially via acetylated form); this interaction prevents binding of GTF2B to GTF2F2. Interacts with GTF2F2 (via N-terminus); this interaction is inhibited in presence of GTF2F1. Interacts with the transcription elongation factor TCEA2. Interacts with HSF1 (via transactivation domain). Interacts with GPBP1. Acetylated. Autoacetylated; autoacetylation at Lys-238 stimulates transcription activation.

It is found in the nucleus. The protein localises to the chromosome. The catalysed reaction is L-lysyl-[protein] + acetyl-CoA = N(6)-acetyl-L-lysyl-[protein] + CoA + H(+). Functionally, general transcription factor that plays a role in transcription initiation by RNA polymerase II (Pol II). Involved in the pre-initiation complex (PIC) formation and Pol II recruitment at promoter DNA. Together with the TATA box-bound TBP forms the core initiation complex and provides a bridge between TBP and the Pol II-TFIIF complex. Released from the PIC early following the onset of transcription during the initiation and elongation transition and reassociates with TBP during the next transcription cycle. Associates with chromatin to core promoter-specific regions. Binds to two distinct DNA core promoter consensus sequence elements in a TBP-independent manner; these IIB-recognition elements (BREs) are localized immediately upstream (BREu), 5'-[GC][GC][GA]CGCC-3', and downstream (BREd), 5'-[GA]T[TGA][TG][GT][TG][TG]-3', of the TATA box element. Modulates transcription start site selection. Also exhibits autoacetyltransferase activity that contributes to the activated transcription. This Mus musculus (Mouse) protein is Transcription initiation factor IIB.